The chain runs to 474 residues: Chromosomal replication initiator protein DnaA (474 aa).

Residues 1–91 are domain I, interacts with DnaA modulators; it reads MSEELWQRCL…STRASTPAAS (91 aa). The segment at 89–138 is disordered; it reads AASYFNGSSSSSSNGPITTPAAAPAPRQPESDSRPQPTSLGGARKHRSNL. The interval 91-136 is domain II; the sequence is SYFNGSSSSSSNGPITTPAAAPAPRQPESDSRPQPTSLGGARKHRS. Residues 96 to 113 show a composition bias toward low complexity; sequence SSSSSSNGPITTPAAAPA. A domain III, AAA+ region region spans residues 137-354; the sequence is NLNTGFTFST…GALRRVIAHV (218 aa). ATP-binding residues include Gly-182, Gly-184, Lys-185, and Thr-186. Residues 355 to 474 form a domain IV, binds dsDNA region; that stretch reads RFTGAQIDIG…YLNLLRTLTS (120 aa).

Belongs to the DnaA family. In terms of assembly, oligomerizes as a right-handed, spiral filament on DNA at oriC.

Its subcellular location is the cytoplasm. Its function is as follows. Plays an essential role in the initiation and regulation of chromosomal replication. ATP-DnaA binds to the origin of replication (oriC) to initiate formation of the DNA replication initiation complex once per cell cycle. Binds the DnaA box (a 9 base pair repeat at the origin) and separates the double-stranded (ds)DNA. Forms a right-handed helical filament on oriC DNA; dsDNA binds to the exterior of the filament while single-stranded (ss)DNA is stabiized in the filament's interior. The ATP-DnaA-oriC complex binds and stabilizes one strand of the AT-rich DNA unwinding element (DUE), permitting loading of DNA polymerase. After initiation quickly degrades to an ADP-DnaA complex that is not apt for DNA replication. Binds acidic phospholipids. The sequence is that of Chromosomal replication initiator protein DnaA from Alcanivorax borkumensis (strain ATCC 700651 / DSM 11573 / NCIMB 13689 / SK2).